We begin with the raw amino-acid sequence, 591 residues long: Metalloendopeptidase OPG085 (591 aa).

His-41 is a Zn(2+) binding site. Residue Glu-44 is part of the active site. Zn(2+)-binding residues include His-45 and Glu-112.

It belongs to the peptidase M44 family. Zn(2+) serves as cofactor. Undergoes proteolytic processing during the course of infection. May be cleaved into 46 kDa and 22 kDa products (Potential).

The protein localises to the virion. Probably involved in maturation of some viral proteins by processing them preferentially at Ala-Gly-|-Ser/Thr/Lys motifs. Does not seem to be responsible for the cleavage of major core proteins. This chain is Metalloendopeptidase OPG085 (OPG085), found in Variola virus (isolate Human/India/Ind3/1967) (VARV).